The sequence spans 128 residues: Crossover junction endodeoxyribonuclease Hjc (128 aa).

Glutamate 10 is a Mg(2+) binding site. Serine 30 is a catalytic residue. 2 residues coordinate Mg(2+): aspartate 34 and glutamate 47.

It belongs to the Holliday junction resolvase Hjc family. In terms of assembly, homodimer. It depends on Mg(2+) as a cofactor.

The catalysed reaction is Endonucleolytic cleavage at a junction such as a reciprocal single-stranded crossover between two homologous DNA duplexes (Holliday junction).. A structure-specific endonuclease that resolves Holliday junction (HJ) intermediates during genetic recombination. Cleaves 4-way DNA junctions introducing paired nicks in opposing strands, leaving a 5'-terminal phosphate and a 3'-terminal hydroxyl group that are subsequently ligated to produce recombinant products. In Thermococcus kodakarensis (strain ATCC BAA-918 / JCM 12380 / KOD1) (Pyrococcus kodakaraensis (strain KOD1)), this protein is Crossover junction endodeoxyribonuclease Hjc.